A 442-amino-acid chain; its full sequence is MGKRSKTSRKGKKAWRANISSEDIEDFFEKTTRDALSGGNLSAAPSEDLFHVDKSHDLPVKRKIEKHRERVLRVDSILKKNPFVQLVPSSKPKLKKSKKTIVIEDKAPKQVQKSVGDDSVMADLWGDDSKGEHESNPRKIFKNPSIISAVEIEHPGCSYNPTTESHQDMLAEAVAQEMQKVYKTELGPAPVPLTIEGDTLSEDERYFLDVDNFSEGEDNENVENEVSEAGIKLKENPFVQLKPSSNTNLKKIEDKTPRQAQKSVGDDSVMVDLLGDDIKEDLKYFLEVGNVGEGEDNKDVKIEVSEAGNNVSRKTKRVTRVELNKRCRQKALRKKETKEKAKEKILNEIDSLPNILEEIAKEDEDKQNKHLRRVIAKQEVLKIRPPRLGKYKFEAPPVQVLLTEEMTGSLRKLKACCTLARDRFKSLEKRGILVPSKQIRRF.

The disordered stretch occupies residues lysine 242 to valine 264.

Belongs to the NOP53 family.

It is found in the nucleus. Its subcellular location is the nucleolus. It localises to the nucleoplasm. In terms of biological role, may play a role in ribosome biogenesis. The sequence is that of Ribosome biogenesis protein NOP53 from Arabidopsis thaliana (Mouse-ear cress).